We begin with the raw amino-acid sequence, 173 residues long: ATP synthase subunit delta (173 aa).

This sequence belongs to the ATPase delta chain family. As to quaternary structure, F-type ATPases have 2 components, F(1) - the catalytic core - and F(0) - the membrane proton channel. F(1) has five subunits: alpha(3), beta(3), gamma(1), delta(1), epsilon(1). F(0) has three main subunits: a(1), b(2) and c(10-14). The alpha and beta chains form an alternating ring which encloses part of the gamma chain. F(1) is attached to F(0) by a central stalk formed by the gamma and epsilon chains, while a peripheral stalk is formed by the delta and b chains.

It localises to the cell inner membrane. In terms of biological role, f(1)F(0) ATP synthase produces ATP from ADP in the presence of a proton or sodium gradient. F-type ATPases consist of two structural domains, F(1) containing the extramembraneous catalytic core and F(0) containing the membrane proton channel, linked together by a central stalk and a peripheral stalk. During catalysis, ATP synthesis in the catalytic domain of F(1) is coupled via a rotary mechanism of the central stalk subunits to proton translocation. Functionally, this protein is part of the stalk that links CF(0) to CF(1). It either transmits conformational changes from CF(0) to CF(1) or is implicated in proton conduction. This is ATP synthase subunit delta from Campylobacter lari (strain RM2100 / D67 / ATCC BAA-1060).